Consider the following 156-residue polypeptide: Keratin-associated protein 13-4 (156 aa).

A run of 4 repeats spans residues C37–N46, C47–S56, C57–T66, and C73–G82. The segment at C37–G82 is 4 X 10 AA approximate repeats.

Belongs to the PMG family. As to quaternary structure, interacts with hair keratins.

In the hair cortex, hair keratin intermediate filaments are embedded in an interfilamentous matrix, consisting of hair keratin-associated proteins (KRTAP), which are essential for the formation of a rigid and resistant hair shaft through their extensive disulfide bond cross-linking with abundant cysteine residues of hair keratins. The matrix proteins include the high-sulfur and high-glycine-tyrosine keratins. The polypeptide is Keratin-associated protein 13-4 (KRTAP13-4) (Macaca fascicularis (Crab-eating macaque)).